Here is a 153-residue protein sequence, read N- to C-terminus: ORM1-like protein 2 (153 aa).

Topologically, residues 1-21 (MNVGVAHSEVNPNTRVMNSRG) are cytoplasmic. 2 helical membrane-spanning segments follow: residues 22–42 (IWLAYIILVGLLHVVLLSIPF) and 43–63 (FSIPVVWTLTNVIHNLAMYIF). Residues 64–105 (LHTVKGTPFETPDQGKARLLTHWEQMDYGLQFTSSRKFLSIS) lie on the Cytoplasmic side of the membrane. The chain crosses the membrane as a helical span at residues 106–126 (PIVLYLLASFYTKYDAAHFLI). Over 127–153 (NTASLLSVLLPKLPQFHGVRLFGINKY) the chain is Extracellular.

It belongs to the ORM family. As to quaternary structure, ceramide-sensitive subunit of the serine palmitoyltransferase (SPT) complex, which is also composed of SPTLC1, SPTLC2/3 and SPTSSA/B.

It is found in the endoplasmic reticulum membrane. In terms of biological role, plays an essential role in the homeostatic regulation of sphingolipid de novo biosynthesis by modulating the activity of the serine palmitoyltransferase (SPT) in response to ceramide levels. When complexed to SPT, the binding of ceramides to its N-terminus stabilizes a conformation that block SPT substrate entry, hence preventing SPT catalytic activity. Through this mechanism, maintains ceramide levels at sufficient concentrations for the production of complex sphingolipids, but which prevents the accumulation of ceramides to levels that trigger apoptosis. This chain is ORM1-like protein 2 (Ormdl2), found in Mus musculus (Mouse).